The primary structure comprises 373 residues: Spermidine/putrescine import ATP-binding protein PotA (373 aa).

The ABC transporter domain occupies 6-236 (LSLSNLTKQF…PANLFTARFV (231 aa)). 38-45 (GPSGCGKT) contacts ATP.

The protein belongs to the ABC transporter superfamily. Spermidine/putrescine importer (TC 3.A.1.11.1) family. The complex is composed of two ATP-binding proteins (PotA), two transmembrane proteins (PotB and PotC) and a solute-binding protein (PotD).

Its subcellular location is the cell inner membrane. It catalyses the reaction ATP + H2O + polyamine-[polyamine-binding protein]Side 1 = ADP + phosphate + polyamineSide 2 + [polyamine-binding protein]Side 1.. In terms of biological role, part of the ABC transporter complex PotABCD involved in spermidine/putrescine import. Responsible for energy coupling to the transport system. This Marinobacter nauticus (strain ATCC 700491 / DSM 11845 / VT8) (Marinobacter aquaeolei) protein is Spermidine/putrescine import ATP-binding protein PotA.